Here is a 266-residue protein sequence, read N- to C-terminus: DLA class II histocompatibility antigen, DR-1 beta chain (266 aa).

Positions 1–29 (MVCLCFLGGSWMTALMLILMVLNPPFAWA) are cleaved as a signal peptide. The beta-1 stretch occupies residues 30–124 (RDTPPHFLEV…IESFTVQRRV (95 aa)). Topologically, residues 30-227 (RDTPPHFLEV…RAQSDSAQSK (198 aa)) are extracellular. 2 disulfide bridges follow: Cys-44–Cys-108 and Cys-146–Cys-202. N-linked (GlcNAc...) asparagine glycosylation is present at Asn-48. Residues 125-227 (EPTVTVYPTK…RAQSDSAQSK (103 aa)) form a beta-2 region. One can recognise an Ig-like C1-type domain in the interval 126–214 (PTVTVYPTKT…EHPSLTSPVT (89 aa)). The chain crosses the membrane as a helical span at residues 228-250 (MLSGIGGFVLGLLFLAVGLFIYF). The Cytoplasmic segment spans residues 251–266 (RNQKGHSGLQPTGLLS).

Belongs to the MHC class II family.

It localises to the membrane. This is DLA class II histocompatibility antigen, DR-1 beta chain from Canis lupus familiaris (Dog).